The following is a 186-amino-acid chain: Ribosome-recycling factor (186 aa).

It belongs to the RRF family.

Its subcellular location is the cytoplasm. Responsible for the release of ribosomes from messenger RNA at the termination of protein biosynthesis. May increase the efficiency of translation by recycling ribosomes from one round of translation to another. The polypeptide is Ribosome-recycling factor (Chlorobium phaeovibrioides (strain DSM 265 / 1930) (Prosthecochloris vibrioformis (strain DSM 265))).